The following is a 1423-amino-acid chain: DNA-directed RNA polymerase subunit beta' (1423 aa).

Residues Cys-71, Cys-73, Cys-86, and Cys-89 each contribute to the Zn(2+) site. Mg(2+) is bound by residues Asp-461, Asp-463, and Asp-465. Zn(2+) is bound by residues Cys-815, Cys-889, Cys-896, and Cys-899.

The protein belongs to the RNA polymerase beta' chain family. The RNAP catalytic core consists of 2 alpha, 1 beta, 1 beta' and 1 omega subunit. When a sigma factor is associated with the core the holoenzyme is formed, which can initiate transcription. Mg(2+) serves as cofactor. Zn(2+) is required as a cofactor.

It catalyses the reaction RNA(n) + a ribonucleoside 5'-triphosphate = RNA(n+1) + diphosphate. In terms of biological role, DNA-dependent RNA polymerase catalyzes the transcription of DNA into RNA using the four ribonucleoside triphosphates as substrates. The chain is DNA-directed RNA polymerase subunit beta' from Actinobacillus pleuropneumoniae serotype 7 (strain AP76).